Reading from the N-terminus, the 614-residue chain is MINIAGVVSIVLFYLLILVVGIWAGRKKQSGNDSEEEVMLAGRSIGLFVGIFTMTATWVGGGYINGTAEAIYTSGLVWCQAPFGYALSLVFGGIFFANPMRKQGYITMLDPLQDSFGERMGGLLFLPALCGEVFWAAGILAALGATLSVIIDMDHRTSVILSSCIAIFYTLFGGLYSVAYTDVIQLFCIFIGLWMCIPFAWSNEHVGSLSDLEVDWIGHVEPKKHWLYIDYGLLLVFGGIPWQVYFQRVLSSKTAGRAQLLSYVAAAGCILMAIPPVLIGAIAKATPWNETDYKGPYPLTVDETSMILPMVLQYLTPDFVSFFGLGAVSAAVMSSADSSVLSAASMFARNVYKLIFRQKASEMEIIWVMRVAIIVVGILATIMALTIPSIYGLWSMCSDLVYVILFPQLLMVVHFKKHCNTYGSLSAYIVALAIRLSGGEAILGLAPLIKYPGYDEETKEQMFPFRTMAMLLSLVTLISVSWWTKMMFESGKLPPSYDYFRCVVNIPEDVQRVGDPSESGEQLSVMAGPLARSYGAATMAGKDERNGRINPALESDDDLPVAEARRINQETAQAQVKKMLDNATGVKPSGGGGGHLQSQSGMAMPTAEQDNTAF.

The helical transmembrane segment at 6-26 (GVVSIVLFYLLILVVGIWAGR) threads the bilayer. The Cytoplasmic portion of the chain corresponds to 27-44 (KKQSGNDSEEEVMLAGRS). Residues 45–65 (IGLFVGIFTMTATWVGGGYIN) form a helical membrane-spanning segment. Residues 66–75 (GTAEAIYTSG) lie on the Extracellular side of the membrane. A helical membrane pass occupies residues 76–96 (LVWCQAPFGYALSLVFGGIFF). Topologically, residues 97-119 (ANPMRKQGYITMLDPLQDSFGER) are cytoplasmic. Residues 120-140 (MGGLLFLPALCGEVFWAAGIL) form a helical membrane-spanning segment. Topologically, residues 141-158 (AALGATLSVIIDMDHRTS) are extracellular. The helical transmembrane segment at 159–179 (VILSSCIAIFYTLFGGLYSVA) threads the bilayer. Residues 180-185 (YTDVIQ) lie on the Cytoplasmic side of the membrane. A helical membrane pass occupies residues 186-206 (LFCIFIGLWMCIPFAWSNEHV). Topologically, residues 207 to 225 (GSLSDLEVDWIGHVEPKKH) are extracellular. Residues 226-246 (WLYIDYGLLLVFGGIPWQVYF) form a helical membrane-spanning segment. The Cytoplasmic portion of the chain corresponds to 247–262 (QRVLSSKTAGRAQLLS). The chain crosses the membrane as a helical span at residues 263–283 (YVAAAGCILMAIPPVLIGAIA). Topologically, residues 284-305 (KATPWNETDYKGPYPLTVDETS) are extracellular. Asparagine 289 is a glycosylation site (N-linked (GlcNAc...) asparagine). The helical transmembrane segment at 306–326 (MILPMVLQYLTPDFVSFFGLG) threads the bilayer. Residues 327–364 (AVSAAVMSSADSSVLSAASMFARNVYKLIFRQKASEME) are Cytoplasmic-facing. A helical membrane pass occupies residues 365–385 (IIWVMRVAIIVVGILATIMAL). At 386–394 (TIPSIYGLW) the chain is on the extracellular side. A helical membrane pass occupies residues 395–415 (SMCSDLVYVILFPQLLMVVHF). Residues 416-424 (KKHCNTYGS) are Cytoplasmic-facing. A helical membrane pass occupies residues 425–445 (LSAYIVALAIRLSGGEAILGL). Over 446 to 467 (APLIKYPGYDEETKEQMFPFRT) the chain is Extracellular. The chain crosses the membrane as a helical span at residues 468-488 (MAMLLSLVTLISVSWWTKMMF). The Cytoplasmic portion of the chain corresponds to 489–614 (ESGKLPPSYD…PTAEQDNTAF (126 aa)). Positions 583–614 (ATGVKPSGGGGGHLQSQSGMAMPTAEQDNTAF) are disordered.

It belongs to the sodium:solute symporter (SSF) (TC 2.A.21) family.

It localises to the membrane. Functionally, imports choline from the extracellular space to the neuron with high affinity. Rate-limiting step in acetylcholine synthesis. Sodium ion and chloride ion dependent. This chain is High-affinity choline transporter 1, found in Drosophila melanogaster (Fruit fly).